The primary structure comprises 470 residues: ATP synthase subunit beta (470 aa).

155 to 162 contacts ATP; sequence GGAGVGKT.

This sequence belongs to the ATPase alpha/beta chains family. In terms of assembly, F-type ATPases have 2 components, CF(1) - the catalytic core - and CF(0) - the membrane proton channel. CF(1) has five subunits: alpha(3), beta(3), gamma(1), delta(1), epsilon(1). CF(0) has three main subunits: a(1), b(2) and c(9-12). The alpha and beta chains form an alternating ring which encloses part of the gamma chain. CF(1) is attached to CF(0) by a central stalk formed by the gamma and epsilon chains, while a peripheral stalk is formed by the delta and b chains.

It is found in the cell membrane. It carries out the reaction ATP + H2O + 4 H(+)(in) = ADP + phosphate + 5 H(+)(out). In terms of biological role, produces ATP from ADP in the presence of a proton gradient across the membrane. The catalytic sites are hosted primarily by the beta subunits. This is ATP synthase subunit beta from Staphylococcus epidermidis (strain ATCC 35984 / DSM 28319 / BCRC 17069 / CCUG 31568 / BM 3577 / RP62A).